Consider the following 241-residue polypeptide: UDP-2,3-diacylglucosamine hydrolase (241 aa).

The Mn(2+) site is built by Asp-8, His-10, Asp-41, Asn-79, and His-114. A substrate-binding site is contributed by 79–80 (NR). Residues Asp-122, Ser-160, Asn-164, Lys-167, and His-195 each coordinate substrate. The Mn(2+) site is built by His-195 and His-197.

This sequence belongs to the LpxH family. Mn(2+) serves as cofactor.

The protein resides in the cell inner membrane. The enzyme catalyses UDP-2-N,3-O-bis[(3R)-3-hydroxytetradecanoyl]-alpha-D-glucosamine + H2O = 2-N,3-O-bis[(3R)-3-hydroxytetradecanoyl]-alpha-D-glucosaminyl 1-phosphate + UMP + 2 H(+). The protein operates within glycolipid biosynthesis; lipid IV(A) biosynthesis; lipid IV(A) from (3R)-3-hydroxytetradecanoyl-[acyl-carrier-protein] and UDP-N-acetyl-alpha-D-glucosamine: step 4/6. In terms of biological role, hydrolyzes the pyrophosphate bond of UDP-2,3-diacylglucosamine to yield 2,3-diacylglucosamine 1-phosphate (lipid X) and UMP by catalyzing the attack of water at the alpha-P atom. Involved in the biosynthesis of lipid A, a phosphorylated glycolipid that anchors the lipopolysaccharide to the outer membrane of the cell. This is UDP-2,3-diacylglucosamine hydrolase from Aeromonas hydrophila subsp. hydrophila (strain ATCC 7966 / DSM 30187 / BCRC 13018 / CCUG 14551 / JCM 1027 / KCTC 2358 / NCIMB 9240 / NCTC 8049).